A 388-amino-acid polypeptide reads, in one-letter code: F-box protein At3g49510 (388 aa).

The F-box domain maps to 1–47 (MTTISDLSDDLVGDILSRVPFTSLISVRSTCKKWNALSKNQIFGRKT).

This is F-box protein At3g49510 from Arabidopsis thaliana (Mouse-ear cress).